A 387-amino-acid polypeptide reads, in one-letter code: Anhydro-N-acetylmuramic acid kinase (387 aa).

9–16 provides a ligand contact to ATP; the sequence is GTSVDGID.

Belongs to the anhydro-N-acetylmuramic acid kinase family.

It carries out the reaction 1,6-anhydro-N-acetyl-beta-muramate + ATP + H2O = N-acetyl-D-muramate 6-phosphate + ADP + H(+). The protein operates within amino-sugar metabolism; 1,6-anhydro-N-acetylmuramate degradation. It functions in the pathway cell wall biogenesis; peptidoglycan recycling. Its function is as follows. Catalyzes the specific phosphorylation of 1,6-anhydro-N-acetylmuramic acid (anhMurNAc) with the simultaneous cleavage of the 1,6-anhydro ring, generating MurNAc-6-P. Is required for the utilization of anhMurNAc either imported from the medium or derived from its own cell wall murein, and thus plays a role in cell wall recycling. The chain is Anhydro-N-acetylmuramic acid kinase from Synechocystis sp. (strain ATCC 27184 / PCC 6803 / Kazusa).